Reading from the N-terminus, the 70-residue chain is Large ribosomal subunit protein bL31 (70 aa).

Positions 16, 18, 37, and 40 each coordinate Zn(2+).

Belongs to the bacterial ribosomal protein bL31 family. Type A subfamily. As to quaternary structure, part of the 50S ribosomal subunit. Zn(2+) is required as a cofactor.

In terms of biological role, binds the 23S rRNA. This is Large ribosomal subunit protein bL31 from Ectopseudomonas mendocina (strain ymp) (Pseudomonas mendocina).